We begin with the raw amino-acid sequence, 241 residues long: Methylthioribulose-1-phosphate dehydratase (241 aa).

Residue C96 coordinates substrate. Residues H114 and H116 each coordinate Zn(2+). Residue E138 is the Proton donor/acceptor of the active site. H194 serves as a coordination point for Zn(2+).

Belongs to the aldolase class II family. MtnB subfamily. Requires Zn(2+) as cofactor.

It is found in the cytoplasm. The enzyme catalyses 5-(methylsulfanyl)-D-ribulose 1-phosphate = 5-methylsulfanyl-2,3-dioxopentyl phosphate + H2O. The protein operates within amino-acid biosynthesis; L-methionine biosynthesis via salvage pathway; L-methionine from S-methyl-5-thio-alpha-D-ribose 1-phosphate: step 2/6. Functionally, catalyzes the dehydration of methylthioribulose-1-phosphate (MTRu-1-P) into 2,3-diketo-5-methylthiopentyl-1-phosphate (DK-MTP-1-P). Functions in the methionine salvage pathway. May play a role in apoptosis. This is Methylthioribulose-1-phosphate dehydratase from Danio rerio (Zebrafish).